Reading from the N-terminus, the 449-residue chain is C4-dicarboxylate transport protein (449 aa).

9 helical membrane-spanning segments follow: residues 5–25 (AVFK…VSLG), 45–65 (LIKM…IAGM), 77–97 (LAVL…LIVV), 149–169 (GDML…HSFG), 185–205 (VLFG…FGAM), 231–251 (CVIF…FSII), 298–318 (GYSF…VFIA), 332–352 (TLLV…GSGF), and 353–373 (IVLA…LALI).

The protein belongs to the dicarboxylate/amino acid:cation symporter (DAACS) (TC 2.A.23) family.

It is found in the cell inner membrane. Its function is as follows. Responsible for the transport of dicarboxylates such as succinate, fumarate, and malate from the periplasm across the membrane. The polypeptide is C4-dicarboxylate transport protein (Dechloromonas aromatica (strain RCB)).